The primary structure comprises 59 residues: Potassium channel toxin alpha-KTx 4.5 (59 aa).

Positions 1–22 (MKAFYGVLIIFILISMLDLSQQ) are cleaved as a signal peptide. Disulfide bonds link C29–C50, C35–C55, and C39–C57. The interval 48-55 (GKCMNGKC) is interaction with Ca(2+)-activated K(+) channels.

Expressed by the venom gland.

Its subcellular location is the secreted. Functionally, inhibits with low potency Kv1.1/KCNA1, Kv1.2/KCNA2, Kv1.3/KCNA3 and Kv11.1/KCNH2/ERG1 voltage-gated potassium channels. The sequence is that of Potassium channel toxin alpha-KTx 4.5 from Tityus costatus (Brazilian scorpion).